Reading from the N-terminus, the 216-residue chain is L-fuculose phosphate aldolase (216 aa).

Substrate-binding positions include 28–29, 43–44, and 71–72; these read GN, TG, and SS. The Proton donor/acceptor role is filled by glutamate 73. Zn(2+)-binding residues include glutamate 73, histidine 92, histidine 94, and histidine 155.

The protein belongs to the aldolase class II family. AraD/FucA subfamily. In terms of assembly, homotetramer. The cofactor is Zn(2+).

The enzyme catalyses L-fuculose 1-phosphate = (S)-lactaldehyde + dihydroxyacetone phosphate. Its pathway is carbohydrate degradation; L-fucose degradation; L-lactaldehyde and glycerone phosphate from L-fucose: step 3/3. Its function is as follows. Involved in the degradation of L-fucose and D-arabinose. Catalyzes the reversible cleavage of L-fuculose 1-phosphate (Fuc1P) to yield dihydroxyacetone phosphate (DHAP) and L-lactaldehyde. The chain is L-fuculose phosphate aldolase from Haemophilus influenzae (strain ATCC 51907 / DSM 11121 / KW20 / Rd).